Here is a 126-residue protein sequence, read N- to C-terminus: Prefoldin subunit beta (126 aa).

It belongs to the prefoldin subunit beta family. Heterohexamer of two alpha and four beta subunits.

The protein localises to the cytoplasm. Molecular chaperone capable of stabilizing a range of proteins. Seems to fulfill an ATP-independent, HSP70-like function in archaeal de novo protein folding. This Methanocella arvoryzae (strain DSM 22066 / NBRC 105507 / MRE50) protein is Prefoldin subunit beta.